The primary structure comprises 447 residues: Alpha-1,6-mannosyl-glycoprotein 2-beta-N-acetylglucosaminyltransferase (447 aa).

At 1-9 (MRFRIYKRK) the chain is on the cytoplasmic side. Residues 10-29 (VLILTLVVAACGFVLWSSNG) form a helical; Signal-anchor for type II membrane protein membrane-spanning segment. At 30 to 447 (RQRKNEALAP…ELCKSYRRLQ (418 aa)) the chain is on the lumenal side. 2 N-linked (GlcNAc...) asparagine glycosylation sites follow: N69 and N86. Residues 123–127 (QVHNR) and D154 each bind substrate. Residues C196 and C210 are joined by a disulfide bond. 229–233 (QTKHH) lines the substrate pocket. Mn(2+) is bound at residue D261. Cysteines 283 and 286 form a disulfide. Position 298 (R298) interacts with substrate. 3 disulfide bridges follow: C334–C357, C339–C440, and C378–C386. Mn(2+) is bound at residue H374.

Belongs to the glycosyltransferase 16 (GT16) protein family. As to quaternary structure, homodimer. Requires Mn(2+) as cofactor.

The protein localises to the golgi apparatus membrane. It catalyses the reaction an N(4)-{beta-D-GlcNAc-(1-&gt;2)-alpha-D-Man-(1-&gt;3)-[alpha-D-Man-(1-&gt;6)]-beta-D-Man-(1-&gt;4)-beta-D-GlcNAc-(1-&gt;4)-beta-D-GlcNAc}-L-asparaginyl-[protein] + UDP-N-acetyl-alpha-D-glucosamine = N(4)-{beta-D-GlcNAc-(1-&gt;2)-alpha-D-Man-(1-&gt;3)-[beta-D-GlcNAc-(1-&gt;2)-alpha-D-Man-(1-&gt;6)]-beta-D-Man-(1-&gt;4)-beta-D-GlcNAc-(1-&gt;4)-beta-D-GlcNAc}-L-asparaginyl-[protein] + UDP + H(+). It participates in protein modification; protein glycosylation. Its function is as follows. Plays an essential role in protein N-glycosylation. Catalyzes the transfer of N-acetylglucosamine (GlcNAc) onto the free terminal mannose moiety in the core structure of the nascent N-linked glycan chain, giving rise to the second branch in complex glycans. This Homo sapiens (Human) protein is Alpha-1,6-mannosyl-glycoprotein 2-beta-N-acetylglucosaminyltransferase (MGAT2).